We begin with the raw amino-acid sequence, 427 residues long: Flotillin-1 (427 aa).

A phosphoserine mark is found at Ser19, Ser163, and Ser385. The residue at position 387 (Thr387) is a Phosphothreonine.

The protein belongs to the band 7/mec-2 family. Flotillin subfamily. As to quaternary structure, heterooligomeric complex of flotillin-1 and flotillin-2 and caveolin-1 and caveolin-2. Interacts with ECPAS.

Its subcellular location is the cell membrane. The protein localises to the endosome. The protein resides in the membrane. It localises to the caveola. It is found in the melanosome. Its subcellular location is the membrane raft. May act as a scaffolding protein within caveolar membranes, functionally participating in formation of caveolae or caveolae-like vesicles. This chain is Flotillin-1 (FLOT1), found in Macaca mulatta (Rhesus macaque).